A 132-amino-acid chain; its full sequence is Small ribosomal subunit protein uS8 (132 aa).

This sequence belongs to the universal ribosomal protein uS8 family. Part of the 30S ribosomal subunit. Contacts proteins S5 and S12.

One of the primary rRNA binding proteins, it binds directly to 16S rRNA central domain where it helps coordinate assembly of the platform of the 30S subunit. This is Small ribosomal subunit protein uS8 from Alkaliphilus oremlandii (strain OhILAs) (Clostridium oremlandii (strain OhILAs)).